The chain runs to 437 residues: Magnetosome protein MamN (437 aa).

Transmembrane regions (helical) follow at residues 26–46 (LAVL…GTYT), 53–73 (SIYF…ALLA), 95–115 (WILV…NSLI), 136–156 (VPVI…TMIG), 174–194 (FIGG…LFFE), 229–249 (YGLI…PLKV), 252–268 (GWIA…LGRF), 281–301 (DILF…VGIL), 320–340 (AILL…GTSA), 358–378 (AAWW…LSGA), and 416–436 (WGLP…AVLA).

This sequence belongs to the arsenite-antimonite (ArsB) efflux (TC 2.A.45) family.

The protein resides in the magnetosome membrane. Plays a role in biomineralization; might regulate pH in the magnetosome. This is Magnetosome protein MamN from Magnetospirillum gryphiswaldense (strain DSM 6361 / JCM 21280 / NBRC 15271 / MSR-1).